Here is a 117-residue protein sequence, read N- to C-terminus: Large ribosomal subunit protein uL22 (117 aa).

This sequence belongs to the universal ribosomal protein uL22 family. As to quaternary structure, part of the 50S ribosomal subunit.

Its function is as follows. This protein binds specifically to 23S rRNA; its binding is stimulated by other ribosomal proteins, e.g. L4, L17, and L20. It is important during the early stages of 50S assembly. It makes multiple contacts with different domains of the 23S rRNA in the assembled 50S subunit and ribosome. The globular domain of the protein is located near the polypeptide exit tunnel on the outside of the subunit, while an extended beta-hairpin is found that lines the wall of the exit tunnel in the center of the 70S ribosome. The chain is Large ribosomal subunit protein uL22 from Synechococcus elongatus (strain ATCC 33912 / PCC 7942 / FACHB-805) (Anacystis nidulans R2).